A 154-amino-acid polypeptide reads, in one-letter code: UPF0225 protein Spro_2712 (154 aa).

The protein belongs to the UPF0225 family.

The protein is UPF0225 protein Spro_2712 of Serratia proteamaculans (strain 568).